We begin with the raw amino-acid sequence, 238 residues long: ATP-dependent dethiobiotin synthetase BioD (238 aa).

12 to 17 (GVGKTV) contributes to the ATP binding site. T16 provides a ligand contact to Mg(2+). The active site involves K37. Substrate is bound at residue T41. ATP-binding positions include D50, 109-112 (EGAG), 170-171 (GS), and 200-202 (PAG). Residues D50 and E109 each coordinate Mg(2+).

The protein belongs to the dethiobiotin synthetase family. As to quaternary structure, homodimer. Requires Mg(2+) as cofactor.

It is found in the cytoplasm. The enzyme catalyses (7R,8S)-7,8-diammoniononanoate + CO2 + ATP = (4R,5S)-dethiobiotin + ADP + phosphate + 3 H(+). It functions in the pathway cofactor biosynthesis; biotin biosynthesis; biotin from 7,8-diaminononanoate: step 1/2. Functionally, catalyzes a mechanistically unusual reaction, the ATP-dependent insertion of CO2 between the N7 and N8 nitrogen atoms of 7,8-diaminopelargonic acid (DAPA, also called 7,8-diammoniononanoate) to form a ureido ring. The protein is ATP-dependent dethiobiotin synthetase BioD of Frankia casuarinae (strain DSM 45818 / CECT 9043 / HFP020203 / CcI3).